Reading from the N-terminus, the 314-residue chain is Acetyl-coenzyme A carboxylase carboxyl transferase subunit beta (314 aa).

Positions leucine 37–tyrosine 307 constitute a CoA carboxyltransferase N-terminal domain. Residues cysteine 41, cysteine 44, cysteine 60, and cysteine 63 each coordinate Zn(2+). Residues cysteine 41–cysteine 63 form a C4-type zinc finger.

The protein belongs to the AccD/PCCB family. Acetyl-CoA carboxylase is a heterohexamer composed of biotin carboxyl carrier protein (AccB), biotin carboxylase (AccC) and two subunits each of ACCase subunit alpha (AccA) and ACCase subunit beta (AccD). It depends on Zn(2+) as a cofactor.

The protein resides in the cytoplasm. It catalyses the reaction N(6)-carboxybiotinyl-L-lysyl-[protein] + acetyl-CoA = N(6)-biotinyl-L-lysyl-[protein] + malonyl-CoA. Its pathway is lipid metabolism; malonyl-CoA biosynthesis; malonyl-CoA from acetyl-CoA: step 1/1. Component of the acetyl coenzyme A carboxylase (ACC) complex. Biotin carboxylase (BC) catalyzes the carboxylation of biotin on its carrier protein (BCCP) and then the CO(2) group is transferred by the transcarboxylase to acetyl-CoA to form malonyl-CoA. This chain is Acetyl-coenzyme A carboxylase carboxyl transferase subunit beta, found in Synechococcus sp. (strain JA-3-3Ab) (Cyanobacteria bacterium Yellowstone A-Prime).